A 229-amino-acid chain; its full sequence is Uracil-DNA glycosylase (229 aa).

The active-site Proton acceptor is the Asp64.

The protein belongs to the uracil-DNA glycosylase (UDG) superfamily. UNG family.

The protein resides in the cytoplasm. The catalysed reaction is Hydrolyzes single-stranded DNA or mismatched double-stranded DNA and polynucleotides, releasing free uracil.. Functionally, excises uracil residues from the DNA which can arise as a result of misincorporation of dUMP residues by DNA polymerase or due to deamination of cytosine. The protein is Uracil-DNA glycosylase of Escherichia fergusonii (strain ATCC 35469 / DSM 13698 / CCUG 18766 / IAM 14443 / JCM 21226 / LMG 7866 / NBRC 102419 / NCTC 12128 / CDC 0568-73).